The chain runs to 487 residues: 7-deoxyloganetin glucosyltransferase (487 aa).

Histidine 25 acts as the Proton acceptor in catalysis. Position 25 (histidine 25) interacts with an anthocyanidin. The Charge relay role is filled by aspartate 129. 7 residues coordinate UDP-alpha-D-glucose: threonine 151, glutamine 366, histidine 381, tryptophan 384, asparagine 385, serine 386, and glutamate 389. Alanine 404 lines the an anthocyanidin pocket. Residues glutamate 405 and glutamine 406 each coordinate UDP-alpha-D-glucose.

The protein belongs to the UDP-glycosyltransferase family. As to expression, expressed in roots.

The catalysed reaction is 7-deoxyloganetin + UDP-alpha-D-glucose = 7-deoxyloganin + UDP + H(+). Functionally, iridoid glucosyltransferase acting exclusively on 7-deoxyloganetin. No activity with 7-deoxyloganetic acid. The sequence is that of 7-deoxyloganetin glucosyltransferase (UGT85A23) from Catharanthus roseus (Madagascar periwinkle).